The chain runs to 75 residues: Veswaprin-b (75 aa).

An N-terminal signal peptide occupies residues 1-24; it reads MSSGGLLLLLGLLTLWAELTPISG. The tract at residues 23–42 is disordered; it reads SGQDRPKKPGLRPPRPQKPP. The 46-residue stretch at 27-72 folds into the WAP; atypical domain; it reads RPKKPGLRPPRPQKPPCVRECKNDWRCPGEQKCCRYGCIYECRDPI. 3 cysteine pairs are disulfide-bonded: Cys-43-Cys-64, Cys-47-Cys-59, and Cys-53-Cys-68.

It belongs to the venom waprin family. In terms of tissue distribution, expressed by the venom gland.

Its subcellular location is the secreted. Its function is as follows. Damages membranes of susceptible bacteria. Has no hemolytic activity. Not toxic to mice. Does not inhibit the proteinases elastase and cathepsin G. In Demansia vestigiata (Lesser black whip snake), this protein is Veswaprin-b.